A 447-amino-acid polypeptide reads, in one-letter code: Argininosuccinate synthase (447 aa).

ATP-binding positions include 17 to 25 (AFSGGLDTS) and Ala-43. An L-citrulline-binding site is contributed by Tyr-99. Residues Gly-129 and Thr-131 each contribute to the ATP site. Residues Thr-131, Asn-135, and Asp-136 each coordinate L-aspartate. Position 135 (Asn-135) interacts with L-citrulline. Asp-136 serves as a coordination point for ATP. L-citrulline contacts are provided by Arg-139 and Ser-192. ATP is bound at residue Asp-194. Thr-201, Glu-203, and Glu-280 together coordinate L-citrulline.

The protein belongs to the argininosuccinate synthase family. Type 2 subfamily. In terms of assembly, homotetramer.

It localises to the cytoplasm. The catalysed reaction is L-citrulline + L-aspartate + ATP = 2-(N(omega)-L-arginino)succinate + AMP + diphosphate + H(+). It functions in the pathway amino-acid biosynthesis; L-arginine biosynthesis; L-arginine from L-ornithine and carbamoyl phosphate: step 2/3. In Salmonella schwarzengrund (strain CVM19633), this protein is Argininosuccinate synthase.